The sequence spans 586 residues: Arginine--tRNA ligase (586 aa).

The short motif at Pro-127–His-137 is the 'HIGH' region element.

It belongs to the class-I aminoacyl-tRNA synthetase family. As to quaternary structure, monomer.

The protein localises to the cytoplasm. The catalysed reaction is tRNA(Arg) + L-arginine + ATP = L-arginyl-tRNA(Arg) + AMP + diphosphate. This chain is Arginine--tRNA ligase (argS), found in Streptomyces coelicolor (strain ATCC BAA-471 / A3(2) / M145).